Reading from the N-terminus, the 257-residue chain is Ribonuclease HII (257 aa).

Residues 72–257 (TYIAGIDEVG…FAPIKDMIQK (186 aa)) enclose the RNase H type-2 domain. Residues D78, E79, and D170 each coordinate a divalent metal cation.

This sequence belongs to the RNase HII family. Mn(2+) is required as a cofactor. Mg(2+) serves as cofactor.

It is found in the cytoplasm. It catalyses the reaction Endonucleolytic cleavage to 5'-phosphomonoester.. Its function is as follows. Endonuclease that specifically degrades the RNA of RNA-DNA hybrids. This is Ribonuclease HII from Bacillus cereus (strain ATCC 14579 / DSM 31 / CCUG 7414 / JCM 2152 / NBRC 15305 / NCIMB 9373 / NCTC 2599 / NRRL B-3711).